The chain runs to 1033 residues: Tyrosine-protein kinase-like otk (1033 aa).

The first 22 residues, 1–22 (MTARMISIYGLVLASMMASVLA), serve as a signal peptide directing secretion. The Extracellular segment spans residues 23 to 581 (SSSRFQRLPQ…GGDGFLVTRA (559 aa)). Ig-like C2-type domains follow at residues 25 to 114 (SRFQ…AKLS), 113 to 199 (LSVI…RVMS), 251 to 365 (PEDL…VPVS), 368 to 463 (PGVL…VAIN), and 468 to 558 (PKFS…VQLI). The N-linked (GlcNAc...) asparagine glycan is linked to Asn-39. 4 disulfide bridges follow: Cys-46–Cys-95, Cys-137–Cys-188, Cys-276–Cys-354, and Cys-399–Cys-447. Asn-336, Asn-417, Asn-429, Asn-444, Asn-457, Asn-512, and Asn-524 each carry an N-linked (GlcNAc...) asparagine glycan. An intrachain disulfide couples Cys-490 to Cys-542. Residues 582-602 (VLITMTVALAYIVLVVGLMLW) traverse the membrane as a helical segment. Residues 603-1033 (CRYRRQARKA…LSKAMQSAEK (431 aa)) are Cytoplasmic-facing. 2 disordered regions span residues 617–679 (LSTK…KKSA) and 718–760 (SPSD…KTSM). Residues 655-673 (KSSGDAQKSDDTACSQQSR) are compositionally biased toward polar residues. Ser-678 carries the post-translational modification Phosphoserine. Residues 692-1028 (LSELIQIGRG…QLGAALSKAM (337 aa)) enclose the Protein kinase; inactive domain. Positions 720 to 731 (SDKDADTEKQHS) are enriched in basic and acidic residues.

Belongs to the protein kinase superfamily. Tyr protein kinase family. Insulin receptor subfamily. As to quaternary structure, interacts with plexA; component of a receptor complex that mediates the repulsive signaling in response to Semaphorin ligands.

It localises to the cell membrane. Acts as a calcium-dependent, homophilic cell adhesion molecule that regulates neural recognition during the development of the nervous system. Component of the repulsive Plexin signaling response to regulate motor axon guidance at the embryonic stage. Also component of a receptor complex that is required in the adult visual system to innervate the lamina layer; specific targeting of R1-R6 axons. The sequence is that of Tyrosine-protein kinase-like otk from Drosophila yakuba (Fruit fly).